A 325-amino-acid chain; its full sequence is 8-oxo-dGDP phosphatase NUDT18 (325 aa).

One can recognise a Nudix hydrolase domain in the interval 38 to 163 (NVCYIVGAVI…DILSLIDAGL (126 aa)). Residue Leu55 participates in Mg(2+) binding. Positions 73–94 (GRMEECESILEALQREVREEAG) match the Nudix box motif.

Belongs to the Nudix hydrolase family. Mn(2+) is required as a cofactor. Requires Mg(2+) as cofactor.

It catalyses the reaction 8-oxo-dGDP + H2O = 8-oxo-dGMP + phosphate + H(+). It carries out the reaction 8-oxo-dADP + H2O = 8-oxo-dAMP + phosphate + H(+). The catalysed reaction is 2-oxo-dADP + H2O = 2-oxo-dAMP + phosphate + H(+). The enzyme catalyses 8-oxo-GDP + H2O = 8-oxo-GMP + phosphate + H(+). Functionally, mediates the hydrolysis of oxidized nucleoside diphosphate derivatives. Hydrolyzes 8-oxo-7,8-dihydroguanine (8-oxo-Gua)-containing deoxyribo- and ribonucleoside diphosphates to the monophosphates. Hydrolyzes 8-oxo-dGDP and 8-oxo-GDP with the same efficiencies. Also hydrolyzes 8-OH-dADP and 2-OH-dADP. Exhibited no or minimal hydrolysis activity against 8-oxo-dGTP, 8-oxo-GTP, dGTP, GTP, dGDP and GDP. Probably removes oxidized guanine nucleotides from both the DNA and RNA precursor pools. This Danio rerio (Zebrafish) protein is 8-oxo-dGDP phosphatase NUDT18 (nudt18).